Consider the following 261-residue polypeptide: MSRMACKLSYDGTAFAGYQVQPGKRTVQSEVERALQEIHKGARVPVVASGRTDAGVHACGQVLHFDTELTIAPERWVSALNTHLPDDIVVTNAAMVEPDFHARYGAQAKEYRYYIQCGPFENVFRRHFAVHIKQALDVPAMQTAAKHLLGTHDFSAFCAANTTVTDKVRTITHVAVQPSEEGLLISIRGTGFLYNMVRIIVGTLLEIGTGKRVASEMKVILAGKSRNLAGKTAPAHGLCLYEVDYGQPLFVNETPGQVSMN.

The active-site Nucleophile is the Asp-53. Substrate is bound at residue Tyr-111.

Belongs to the tRNA pseudouridine synthase TruA family. Homodimer.

It carries out the reaction uridine(38/39/40) in tRNA = pseudouridine(38/39/40) in tRNA. In terms of biological role, formation of pseudouridine at positions 38, 39 and 40 in the anticodon stem and loop of transfer RNAs. The protein is tRNA pseudouridine synthase A of Shouchella clausii (strain KSM-K16) (Alkalihalobacillus clausii).